The sequence spans 616 residues: Chaperone protein HscA (616 aa).

This sequence belongs to the heat shock protein 70 family.

Its function is as follows. Chaperone involved in the maturation of iron-sulfur cluster-containing proteins. Has a low intrinsic ATPase activity which is markedly stimulated by HscB. Involved in the maturation of IscU. This is Chaperone protein HscA from Serratia proteamaculans (strain 568).